The sequence spans 85 residues: MRITEANPDPDAKAVPAAAAPSTASDAAAAAAATAATAAAAAAATAATAAAAAAATAATAAKAAALTAANAAAAAAATAAAAARG.

A signal peptide spans 1–21 (MRITEANPDPDAKAVPAAAAP).

This sequence belongs to the type-I AFP family.

The protein resides in the secreted. Functionally, contributes to protect fish blood from freezing at subzero sea water temperatures. Lowers the blood freezing point. Binds to nascent ice crystals and prevents further growth. This Pseudopleuronectes americanus (Winter flounder) protein is Ice-structuring protein 4.